A 125-amino-acid chain; its full sequence is Small ribosomal subunit protein uS13 (125 aa).

Residues 92 to 125 (RRSLPVRGQNTQTNARTRKGKRKTVAGKKKAARK) are disordered. Residues 107–125 (RTRKGKRKTVAGKKKAARK) are compositionally biased toward basic residues.

It belongs to the universal ribosomal protein uS13 family. Part of the 30S ribosomal subunit. Forms a loose heterodimer with protein S19. Forms two bridges to the 50S subunit in the 70S ribosome.

Located at the top of the head of the 30S subunit, it contacts several helices of the 16S rRNA. In the 70S ribosome it contacts the 23S rRNA (bridge B1a) and protein L5 of the 50S subunit (bridge B1b), connecting the 2 subunits; these bridges are implicated in subunit movement. Contacts the tRNAs in the A and P-sites. The chain is Small ribosomal subunit protein uS13 from Chlorobium luteolum (strain DSM 273 / BCRC 81028 / 2530) (Pelodictyon luteolum).